The primary structure comprises 810 residues: Abnormal pharyngeal pumping eat-20 (810 aa).

The signal sequence occupies residues 1–20 (MTTFCRVLLIFGIYVAVCCA). Over 21-748 (QSVEDDVFHF…GKQSSAAASW (728 aa)) the chain is Extracellular. 3 N-linked (GlcNAc...) asparagine glycosylation sites follow: Asn90, Asn171, and Asn232. 3 EGF-like domains span residues 220-257 (PPSP…DRCE), 258-293 (LDVC…LLCE), and 301-335 (VAPI…ANCN). 9 disulfides stabilise this stretch: Cys224-Cys235, Cys229-Cys245, Cys247-Cys256, Cys261-Cys272, Cys266-Cys281, Cys283-Cys292, Cys305-Cys314, Cys309-Cys323, and Cys325-Cys334. N-linked (GlcNAc...) asparagine glycosylation occurs at Asn371. Over residues 522–531 (FAPTTGTQQP) the composition is skewed to low complexity. 2 disordered regions span residues 522–567 (FAPT…STMQ) and 684–738 (PHPQ…HTSS). Acidic residues predominate over residues 542-558 (DENEEEEEEETTEETEE). A helical transmembrane segment spans residues 749-769 (IIAIIALIVLGLLLLATSLFI). Residues 770 to 810 (LRYIRQSRKLHGKYNPAREEHNLSAAYAMPMSHIAKEERLI) are Cytoplasmic-facing.

Highly expressed in the pharynx, circumpharyngeal cells, pharyngeal-intestinal valve and a subset of neurons in larval and embryonic stages. Also moderately expressed in the lining of the intestine, coelomocytes, labial process bundles and some hypodermal cells. In adults, it is predominantly expressed in the pharynx, the pharyngeal-intenstinal valve, some circumpharyngeal cells, m3, m4 and m6 pharyngeal muscles, and IL1, OLQ, BAG and ALN neurons. Weaker expression is observed in labial process bundles, coelomocytes, the ventral hypodermal ridge, the vulval hypodermis and the sensory rays of the adult male tail.

Its subcellular location is the membrane. Functionally, regulates pharyngeal pumping during feeding. This chain is Abnormal pharyngeal pumping eat-20 (eat-20), found in Caenorhabditis elegans.